The primary structure comprises 238 residues: CD63 antigen (238 aa).

The Cytoplasmic segment spans residues 1–11; it reads MAVEGGMKCVK. A helical membrane pass occupies residues 12–32; the sequence is FLLYVLLLAFCACAVGLIAIG. Topologically, residues 33–51 are extracellular; it reads VAVQVVLKQAITHETTAGS. A helical transmembrane segment spans residues 52 to 72; sequence LLPVVIIAVGAFLFLVAFVGC. The Cytoplasmic portion of the chain corresponds to 73 to 81; the sequence is CGACKENYC. The chain crosses the membrane as a helical span at residues 82–102; that stretch reads LMITFAIFLSLIMLVEVAVAI. The Extracellular portion of the chain corresponds to 103–203; that stretch reads AGYVFRDQVK…TIAIWLRKNI (101 aa). 4 N-linked (GlcNAc...) asparagine glycosylation sites follow: Asn-116, Asn-130, Asn-150, and Asn-172. Residues 204 to 224 form a helical membrane-spanning segment; sequence LLVAAAALGIAFVEVLGIIFS. The Cytoplasmic segment spans residues 225–238; that stretch reads CCLVKSIRSGYEVM. A Lysosomal targeting motif motif is present at residues 234 to 238; it reads GYEVM.

This sequence belongs to the tetraspanin (TM4SF) family. In terms of assembly, interacts with TIMP1 and ITGB1 and recruits TIMP1 to ITGB1. Interacts with CD9. Identified in a complex with CD9 and ITGB3. Interacts with PMEL. Interacts with KDR/VEGFR2; identified in a complex with ITGB1 and KDR/VEGFR2 and is required to recruit KDR to ITGB1 complexes. Interacts with SYT7. Post-translationally, palmitoylated at a low, basal level in unstimulated platelets. The level of palmitoylation increases when platelets are activated by thrombin (in vitro). Ubiquitous. Strongly expressed in kidney. Detected in spleen, bone marrow, peripheral blood mononuclear cells and macrophages.

The protein localises to the cell membrane. The protein resides in the lysosome membrane. Its subcellular location is the late endosome membrane. It localises to the endosome. It is found in the multivesicular body. The protein localises to the melanosome. The protein resides in the secreted. Its subcellular location is the extracellular exosome. It localises to the cell surface. In terms of biological role, functions as a cell surface receptor for TIMP1 and plays a role in the activation of cellular signaling cascades. Plays a role in the activation of ITGB1 and integrin signaling, leading to the activation of AKT, FAK/PTK2 and MAP kinases. Promotes cell survival, reorganization of the actin cytoskeleton, cell adhesion, spreading and migration, via its role in the activation of AKT and FAK/PTK2. Plays a role in VEGFA signaling via its role in regulating the internalization of KDR/VEGFR2. Plays a role in intracellular vesicular transport processes, and is required for normal trafficking of the PMEL luminal domain that is essential for the development and maturation of melanocytes. Plays a role in the adhesion of leukocytes onto endothelial cells via its role in the regulation of SELP trafficking. May play a role in mast cell degranulation in response to Ms4a2/FceRI stimulation, but not in mast cell degranulation in response to other stimuli. The polypeptide is CD63 antigen (Cd63) (Mus musculus (Mouse)).